The chain runs to 798 residues: Bromodomain-containing protein 2 (798 aa).

At methionine 1 the chain carries N-acetylmethionine. The disordered stretch occupies residues 1–21 (MLQNVTPHKLPGEGNAGLLGL). Phosphothreonine is present on threonine 6. Serine 36 is modified (phosphoserine). The interval 53-72 (LQLAPANPPPPEVSNPKKPG) is disordered. One can recognise a Bromo 1 domain in the interval 73–179 (RVTNQLQYLH…KIFLQKVASM (107 aa)). A protein contacts are provided by aspartate 111, tyrosine 154, asparagine 155, lysine 156, aspartate 159, and aspartate 160. 3 disordered regions span residues 267–348 (PPAQ…LSEQ), 455–648 (EPLE…KRQL), and 735–798 (EKRL…SDSG). Positions 284–297 (TTTPTPTAILAPGS) are enriched in low complexity. Phosphoserine occurs at positions 297, 300, and 304. Residues 315–331 (MRRESGRPIKPPRKDLP) show a composition bias toward basic and acidic residues. The 110-residue stretch at 343-452 (GKLSEQLKHC…DVFEFRYAKM (110 aa)) folds into the Bromo 2 domain. The segment covering 480 to 512 (SSEESSSESSSEEEEEEDEEDEEEESESSDSEE) has biased composition (acidic residues). Positions 542–564 (KPKRKREKKEKKKKRKAEKHRGR) are enriched in basic residues. The Nuclear localization signal motif lies at 553 to 557 (KKKRK). The NET domain maps to 630–712 (DSEEEEESRP…SCLRKKPRKP (83 aa)). Serine 631 bears the Phosphoserine mark. The segment covering 637 to 648 (SRPMSYDEKRQL) has biased composition (basic and acidic residues). Residues 772 to 792 (SASSSSSDSSSSSSSSSSSDT) show a composition bias toward low complexity.

It belongs to the BET family. Homodimer. Interacts with E2F1. Interacts with (acetylated) STAT3; promoting STAT3 recruitment to chromatin. Interacts with CTCF; promoting BRD2 recruitment to chromatin.

It localises to the nucleus. Its subcellular location is the chromosome. Functionally, chromatin reader protein that specifically recognizes and binds histone H4 acetylated at 'Lys-5' and 'Lys-12' (H4K5ac and H4K12ac, respectively), thereby controlling gene expression and remodeling chromatin structures. Recruits transcription factors and coactivators to target gene sites, and activates RNA polymerase II machinery for transcriptional elongation. Plays a key role in genome compartmentalization via its association with CTCF and cohesin: recruited to chromatin by CTCF and promotes formation of topologically associating domains (TADs) via its ability to bind acetylated histones, contributing to CTCF boundary formation and enhancer insulation. Also recognizes and binds acetylated non-histone proteins, such as STAT3. Involved in inflammatory response by regulating differentiation of naive CD4(+) T-cells into T-helper Th17: recognizes and binds STAT3 acetylated at 'Lys-87', promoting STAT3 recruitment to chromatin. In addition to acetylated lysines, also recognizes and binds lysine residues on histones that are both methylated and acetylated on the same side chain to form N6-acetyl-N6-methyllysine (Kacme), an epigenetic mark of active chromatin associated with increased transcriptional initiation. Specifically binds histone H4 acetyl-methylated at 'Lys-5' and 'Lys-12' (H4K5acme and H4K12acme, respectively). In Rattus norvegicus (Rat), this protein is Bromodomain-containing protein 2 (Brd2).